The following is a 247-amino-acid chain: MIRRCFQVAARLGHHRGLLEAPRILPRLNPASAFGSSTDSMFSRFLPEKTDLKDYALPNASWCSDMLSLYQEFLEKTKSSGWIKLPSFKSNRDHIRGLKLPSGLAVSSDKGDCRIFTRCIQVEGQGFEYVIFFQPTQKKSVCLFQPGSYLEGPPGFAHGGSLAAMMDETFSKTAFLAGEGLFTLSLNIRFKNLIPVDSLVVMDVELDKIEDQKLYMSCIAHSRDQQTVYAKSSGVFLQLQLEEESPQ.

Asp167 functions as the Proton donor/acceptor in the catalytic mechanism.

Belongs to the THEM4/THEM5 thioesterase family. As to quaternary structure, homodimer.

It localises to the mitochondrion matrix. It carries out the reaction hexadecanoyl-CoA + H2O = hexadecanoate + CoA + H(+). The enzyme catalyses (9Z,12Z)-octadecadienoyl-CoA + H2O = (9Z,12Z)-octadecadienoate + CoA + H(+). It catalyses the reaction tetradecanoyl-CoA + H2O = tetradecanoate + CoA + H(+). The catalysed reaction is (9Z)-octadecenoyl-CoA + H2O = (9Z)-octadecenoate + CoA + H(+). It carries out the reaction (9Z)-hexadecenoyl-CoA + H2O = (9Z)-hexadecenoate + CoA + H(+). The enzyme catalyses (5Z,8Z,11Z,14Z)-eicosatetraenoyl-CoA + H2O = (5Z,8Z,11Z,14Z)-eicosatetraenoate + CoA + H(+). It catalyses the reaction octadecanoyl-CoA + H2O = octadecanoate + CoA + H(+). Has acyl-CoA thioesterase activity towards long-chain (C16 and C18) fatty acyl-CoA substrates, with a preference for linoleoyl-CoA and other unsaturated long-chain fatty acid-CoA esters. Plays an important role in mitochondrial fatty acid metabolism, and in remodeling of the mitochondrial lipid cardiolipin. Required for normal mitochondrial function. This Homo sapiens (Human) protein is Acyl-coenzyme A thioesterase THEM5 (THEM5).